A 597-amino-acid chain; its full sequence is uncharacterized protein (597 aa).

The next 2 helical transmembrane spans lie at 4-23 and 209-231; these read LLLA…FKIV and FVSV…GIAI.

It is found in the cell membrane. This is an uncharacterized protein from Archaeoglobus fulgidus (strain ATCC 49558 / DSM 4304 / JCM 9628 / NBRC 100126 / VC-16).